The sequence spans 208 residues: Small ribosomal subunit protein uS4 (208 aa).

Residues 24-52 (GVKPFDVKTKKANKAPGQHGQARGGKQSE) are disordered. One can recognise an S4 RNA-binding domain in the interval 98 to 160 (SRLDNVVYRM…AKQQLRIKNA (63 aa)).

This sequence belongs to the universal ribosomal protein uS4 family. As to quaternary structure, part of the 30S ribosomal subunit. Contacts protein S5. The interaction surface between S4 and S5 is involved in control of translational fidelity.

One of the primary rRNA binding proteins, it binds directly to 16S rRNA where it nucleates assembly of the body of the 30S subunit. Its function is as follows. With S5 and S12 plays an important role in translational accuracy. The chain is Small ribosomal subunit protein uS4 from Acinetobacter baumannii (strain ATCC 17978 / DSM 105126 / CIP 53.77 / LMG 1025 / NCDC KC755 / 5377).